Here is a 361-residue protein sequence, read N- to C-terminus: Molybdopterin synthase catalytic subunit (361 aa).

Substrate-binding positions include 101 to 102 (HR), Lys117, and 124 to 126 (KKE).

This sequence belongs to the MoaE family. MOCS2B subfamily. In terms of assembly, heterotetramer; composed of 2 small (Mocs2A) and 2 large (Mocs2B) subunits.

The protein localises to the cytoplasm. The catalysed reaction is 2 [molybdopterin-synthase sulfur-carrier protein]-C-terminal-Gly-aminoethanethioate + cyclic pyranopterin phosphate + H2O = molybdopterin + 2 [molybdopterin-synthase sulfur-carrier protein]-C-terminal Gly-Gly + 2 H(+). The protein operates within cofactor biosynthesis; molybdopterin biosynthesis. Catalytic subunit of the molybdopterin synthase complex, a complex that catalyzes the conversion of precursor Z into molybdopterin. Acts by mediating the incorporation of 2 sulfur atoms from thiocarboxylated Mocs2A into precursor Z to generate a dithiolene group. The sequence is that of Molybdopterin synthase catalytic subunit from Drosophila pseudoobscura pseudoobscura (Fruit fly).